A 336-amino-acid polypeptide reads, in one-letter code: Shematrin-like protein 1 (336 aa).

The first 16 residues, 1–16 (MLRFIAIVALIATVNA), serve as a signal peptide directing secretion.

As to expression, prismatic layer of shell (at protein level). Expressed primarily in the mantle with highest level in the mantle edge and lower level in the mantle pallium.

Its subcellular location is the secreted. The sequence is that of Shematrin-like protein 1 from Pinctada maxima (Silver-lipped pearl oyster).